Here is a 227-residue protein sequence, read N- to C-terminus: Cytochrome c oxidase subunit 2 (227 aa).

At Met1 to Ser14 the chain is on the mitochondrial intermembrane side. Residues Pro15 to Met45 form a helical membrane-spanning segment. Over Leu46–Gln59 the chain is Mitochondrial matrix. Residues Glu60 to Met87 traverse the membrane as a helical segment. The Mitochondrial intermembrane portion of the chain corresponds to Asp88 to Leu227. 6 residues coordinate Cu cation: His161, Cys196, Glu198, Cys200, His204, and Met207. Glu198 provides a ligand contact to Mg(2+).

It belongs to the cytochrome c oxidase subunit 2 family. As to quaternary structure, component of the cytochrome c oxidase (complex IV, CIV), a multisubunit enzyme composed of 14 subunits. The complex is composed of a catalytic core of 3 subunits MT-CO1, MT-CO2 and MT-CO3, encoded in the mitochondrial DNA, and 11 supernumerary subunits COX4I, COX5A, COX5B, COX6A, COX6B, COX6C, COX7A, COX7B, COX7C, COX8 and NDUFA4, which are encoded in the nuclear genome. The complex exists as a monomer or a dimer and forms supercomplexes (SCs) in the inner mitochondrial membrane with NADH-ubiquinone oxidoreductase (complex I, CI) and ubiquinol-cytochrome c oxidoreductase (cytochrome b-c1 complex, complex III, CIII), resulting in different assemblies (supercomplex SCI(1)III(2)IV(1) and megacomplex MCI(2)III(2)IV(2)). Found in a complex with TMEM177, COA6, COX18, COX20, SCO1 and SCO2. Interacts with TMEM177 in a COX20-dependent manner. Interacts with COX20. Interacts with COX16. The cofactor is Cu cation.

The protein resides in the mitochondrion inner membrane. The catalysed reaction is 4 Fe(II)-[cytochrome c] + O2 + 8 H(+)(in) = 4 Fe(III)-[cytochrome c] + 2 H2O + 4 H(+)(out). In terms of biological role, component of the cytochrome c oxidase, the last enzyme in the mitochondrial electron transport chain which drives oxidative phosphorylation. The respiratory chain contains 3 multisubunit complexes succinate dehydrogenase (complex II, CII), ubiquinol-cytochrome c oxidoreductase (cytochrome b-c1 complex, complex III, CIII) and cytochrome c oxidase (complex IV, CIV), that cooperate to transfer electrons derived from NADH and succinate to molecular oxygen, creating an electrochemical gradient over the inner membrane that drives transmembrane transport and the ATP synthase. Cytochrome c oxidase is the component of the respiratory chain that catalyzes the reduction of oxygen to water. Electrons originating from reduced cytochrome c in the intermembrane space (IMS) are transferred via the dinuclear copper A center (CU(A)) of subunit 2 and heme A of subunit 1 to the active site in subunit 1, a binuclear center (BNC) formed by heme A3 and copper B (CU(B)). The BNC reduces molecular oxygen to 2 water molecules using 4 electrons from cytochrome c in the IMS and 4 protons from the mitochondrial matrix. This chain is Cytochrome c oxidase subunit 2 (MT-CO2), found in Balaenoptera physalus (Fin whale).